A 263-amino-acid chain; its full sequence is Small ribosomal subunit protein eS4, Y isoform 2 (263 aa).

In terms of domain architecture, S4 RNA-binding spans 42–104; the sequence is LPLIVFLRNR…TGEHFRLVYN (63 aa).

The protein belongs to the eukaryotic ribosomal protein eS4 family.

This chain is Small ribosomal subunit protein eS4, Y isoform 2 (RPS4Y2), found in Homo sapiens (Human).